The chain runs to 306 residues: tRNA pseudouridine synthase B (306 aa).

Asp-43 acts as the Nucleophile in catalysis.

It belongs to the pseudouridine synthase TruB family. Type 1 subfamily.

It carries out the reaction uridine(55) in tRNA = pseudouridine(55) in tRNA. Functionally, responsible for synthesis of pseudouridine from uracil-55 in the psi GC loop of transfer RNAs. The sequence is that of tRNA pseudouridine synthase B from Syntrophobacter fumaroxidans (strain DSM 10017 / MPOB).